The sequence spans 217 residues: UPF0193 protein EVG1 (217 aa).

It belongs to the UPF0193 (EVG1) family.

In Homo sapiens (Human), this protein is UPF0193 protein EVG1 (C22orf23).